We begin with the raw amino-acid sequence, 335 residues long: Probable cytosolic iron-sulfur protein assembly protein Ciao1 (335 aa).

WD repeat units lie at residues 12-51 (GHKGRIWGVAWHPKGNVFASCGEDKAIRVWSLSGNTWSTK), 57-96 (GHKRTIREIRWSPCGQYLASASFDATTAIWSKSSGEFECN), 101-140 (GHENEVKSVSWSRSGGLLATCSRDKSVWIWEVAGDDEFEC), 146-185 (AHTQDVKRVVWHPTKDILASASYDNTIKMFAESQLDSDWD), 192-231 (SHTSTVWSIDFDAEGDRLVSCSDDKTLKIWRAYHPGNDAG), 250-289 (QHSRAIYDVSWCKLTGLIATGCGDDGIRIFKETSDSKRDE), and 301-335 (AHEQDVNAVEWNPAVAGQLISCSDDGTIKIWKVDD).

The protein belongs to the WD repeat CIA1 family.

Functionally, essential component of the cytosolic iron-sulfur (Fe/S) protein assembly machinery. Required for the maturation of extramitochondrial Fe/S proteins. This Drosophila pseudoobscura pseudoobscura (Fruit fly) protein is Probable cytosolic iron-sulfur protein assembly protein Ciao1.